The following is an 853-amino-acid chain: NADH-quinone oxidoreductase subunit G 2 (853 aa).

The region spanning 1–78 (MIKVTIDEQS…GMVVRTNTPL (78 aa)) is the 2Fe-2S ferredoxin-type domain. Positions 34, 45, 48, and 62 each coordinate [2Fe-2S] cluster. The 4Fe-4S His(Cys)3-ligated-type domain occupies 78 to 117 (LIEETRSSMLDMLLANHPLDCPICDKGGECELQDMVMAYG). [4Fe-4S] cluster contacts are provided by H94, C98, C101, C107, C148, C151, C154, C198, C224, C227, C231, and C259. 2 consecutive 4Fe-4S ferredoxin-type domains span residues 139–170 (PVII…LGTV) and 179–209 (TGFE…FPYR). The 4Fe-4S Mo/W bis-MGD-type domain maps to 217–273 (LAETDTICPHCGTGCQLTVGARKGEFMRVRSDWEHGVNRETLCVRGRFGLDFIESRD).

This sequence belongs to the complex I 75 kDa subunit family. [2Fe-2S] cluster is required as a cofactor. It depends on [4Fe-4S] cluster as a cofactor.

The enzyme catalyses a quinone + NADH + 5 H(+)(in) = a quinol + NAD(+) + 4 H(+)(out). Functionally, NDH-1 shuttles electrons from NADH, via FMN and iron-sulfur (Fe-S) centers, to quinones in the respiratory chain. The immediate electron acceptor for the enzyme in this species is believed to be ubiquinone. Couples the redox reaction to proton translocation (for every two electrons transferred, four hydrogen ions are translocated across the cytoplasmic membrane), and thus conserves the redox energy in a proton gradient. The sequence is that of NADH-quinone oxidoreductase subunit G 2 (nuoG2) from Rhizobium meliloti (strain 1021) (Ensifer meliloti).